The sequence spans 60 residues: Large ribosomal subunit protein bL32 (60 aa).

The tract at residues 1 to 21 (MAVQQNKKSPSKRGMHRAHNA) is disordered. A compositionally biased stretch (basic residues) spans 9–19 (SPSKRGMHRAH).

Belongs to the bacterial ribosomal protein bL32 family.

The protein is Large ribosomal subunit protein bL32 of Albidiferax ferrireducens (strain ATCC BAA-621 / DSM 15236 / T118) (Rhodoferax ferrireducens).